A 154-amino-acid chain; its full sequence is Heat shock protein beta-3 (154 aa).

Residues A48–G71 are disordered. One can recognise a sHSP domain in the interval L57 to K154.

The protein belongs to the small heat shock protein (HSP20) family.

The protein localises to the cytoplasm. The protein resides in the nucleus. In terms of biological role, inhibitor of actin polymerization. The protein is Heat shock protein beta-3 (Hspb3) of Mus musculus (Mouse).